Consider the following 27-residue polypeptide: Palustrin-1d (27 aa).

Cysteine 21 and cysteine 27 form a disulfide bridge.

As to expression, expressed by the skin glands.

The protein localises to the secreted. In terms of biological role, antimicrobial activity against Gram-negative bacterium E.coli. The sequence is that of Palustrin-1d from Lithobates palustris (Pickerel frog).